Consider the following 814-residue polypeptide: Microbial collagenase (814 aa).

Positions 1 to 21 (MELKILSVAIATTLTSTGVFA) are cleaved as a signal peptide. The propeptide occupies 22–75 (LSEPVSQVTEQHAHSAHTHGVEFNRVEYQPTATLPIQPSKATRVQSLESLDESS). His477 is a binding site for Zn(2+). Glu478 is an active-site residue. Residue His481 participates in Zn(2+) binding. Positions 609–697 (APNAVITANS…VVISALGGND (89 aa)) constitute a PKD domain.

It belongs to the peptidase M9A family. Zn(2+) is required as a cofactor. In terms of processing, proteolytic cleavage might yield three different active forms.

Its subcellular location is the secreted. The catalysed reaction is Digestion of native collagen in the triple helical region at Xaa-|-Gly bonds. With synthetic peptides, a preference is shown for Gly at P3 and P1', Pro and Ala at P2 and P2', and hydroxyproline, Ala or Arg at P3'.. The polypeptide is Microbial collagenase (Vibrio alginolyticus).